A 535-amino-acid chain; its full sequence is CTP synthase (535 aa).

An amidoligase domain region spans residues M1–L267. Position 13 (S13) interacts with CTP. S13 provides a ligand contact to UTP. S14–I19 contributes to the ATP binding site. Y54 is an L-glutamine binding site. Residue D71 coordinates ATP. Mg(2+) contacts are provided by D71 and E141. CTP is bound by residues D148–E150, K188–Q193, and K224. UTP-binding positions include K188–Q193 and K224. R240–A242 is an ATP binding site. In terms of domain architecture, Glutamine amidotransferase type-1 spans K292 to S534. G354 is an L-glutamine binding site. The Nucleophile; for glutamine hydrolysis role is filled by C381. Residues L382–Q385, E405, and R462 each bind L-glutamine. Catalysis depends on residues H507 and E509.

It belongs to the CTP synthase family. In terms of assembly, homotetramer.

It catalyses the reaction UTP + L-glutamine + ATP + H2O = CTP + L-glutamate + ADP + phosphate + 2 H(+). The enzyme catalyses L-glutamine + H2O = L-glutamate + NH4(+). The catalysed reaction is UTP + NH4(+) + ATP = CTP + ADP + phosphate + 2 H(+). The protein operates within pyrimidine metabolism; CTP biosynthesis via de novo pathway; CTP from UDP: step 2/2. With respect to regulation, allosterically activated by GTP, when glutamine is the substrate; GTP has no effect on the reaction when ammonia is the substrate. The allosteric effector GTP functions by stabilizing the protein conformation that binds the tetrahedral intermediate(s) formed during glutamine hydrolysis. Inhibited by the product CTP, via allosteric rather than competitive inhibition. Its function is as follows. Catalyzes the ATP-dependent amination of UTP to CTP with either L-glutamine or ammonia as the source of nitrogen. Regulates intracellular CTP levels through interactions with the four ribonucleotide triphosphates. This chain is CTP synthase, found in Bacillus cereus (strain AH187).